A 570-amino-acid chain; its full sequence is Proline--tRNA ligase (570 aa).

The protein belongs to the class-II aminoacyl-tRNA synthetase family. ProS type 1 subfamily. Homodimer.

The protein resides in the cytoplasm. It catalyses the reaction tRNA(Pro) + L-proline + ATP = L-prolyl-tRNA(Pro) + AMP + diphosphate. In terms of biological role, catalyzes the attachment of proline to tRNA(Pro) in a two-step reaction: proline is first activated by ATP to form Pro-AMP and then transferred to the acceptor end of tRNA(Pro). As ProRS can inadvertently accommodate and process non-cognate amino acids such as alanine and cysteine, to avoid such errors it has two additional distinct editing activities against alanine. One activity is designated as 'pretransfer' editing and involves the tRNA(Pro)-independent hydrolysis of activated Ala-AMP. The other activity is designated 'posttransfer' editing and involves deacylation of mischarged Ala-tRNA(Pro). The misacylated Cys-tRNA(Pro) is not edited by ProRS. The sequence is that of Proline--tRNA ligase from Thermoanaerobacter sp. (strain X514).